Reading from the N-terminus, the 151-residue chain is Sec-independent protein translocase protein TatB (151 aa).

A helical transmembrane segment spans residues Met1 to Gly21. Composition is skewed to basic and acidic residues over residues Lys87 to Arg99 and Glu122 to Ala132. Residues Lys87–Ser151 are disordered. Residues Ala134–Ser151 are compositionally biased toward low complexity.

It belongs to the TatB family. In terms of assembly, the Tat system comprises two distinct complexes: a TatABC complex, containing multiple copies of TatA, TatB and TatC subunits, and a separate TatA complex, containing only TatA subunits. Substrates initially bind to the TatABC complex, which probably triggers association of the separate TatA complex to form the active translocon.

The protein localises to the cell inner membrane. In terms of biological role, part of the twin-arginine translocation (Tat) system that transports large folded proteins containing a characteristic twin-arginine motif in their signal peptide across membranes. Together with TatC, TatB is part of a receptor directly interacting with Tat signal peptides. TatB may form an oligomeric binding site that transiently accommodates folded Tat precursor proteins before their translocation. This chain is Sec-independent protein translocase protein TatB, found in Marinobacter nauticus (strain ATCC 700491 / DSM 11845 / VT8) (Marinobacter aquaeolei).